Consider the following 333-residue polypeptide: Fructose-1,6-bisphosphatase class 1 (333 aa).

E89, D110, L112, and D113 together coordinate Mg(2+). Residues 113 to 116 (DGSS), N206, Y239, 257 to 259 (YLY), and K269 contribute to the substrate site. Position 275 (E275) interacts with Mg(2+).

This sequence belongs to the FBPase class 1 family. In terms of assembly, homotetramer. Mg(2+) is required as a cofactor.

The protein resides in the cytoplasm. It carries out the reaction beta-D-fructose 1,6-bisphosphate + H2O = beta-D-fructose 6-phosphate + phosphate. It participates in carbohydrate biosynthesis; gluconeogenesis. The sequence is that of Fructose-1,6-bisphosphatase class 1 from Sodalis glossinidius (strain morsitans).